We begin with the raw amino-acid sequence, 1280 residues long: Dynactin subunit 1 (1280 aa).

Residues 1-26 (MAQSKRHMYNRTPSGSRMSTEASARP) form a disordered region. The segment covering 11 to 22 (RTPSGSRMSTEA) has biased composition (polar residues). Residues 48 to 90 (GATLFATGKWVGVILDEAKGKNDGTVQGRKYFTCDEGHGIFVR) enclose the CAP-Gly domain. Residues 99-223 (DGADTTSPET…SKEEEGLRDQ (125 aa)) form a disordered region. Over residues 102–114 (DTTSPETPDSSAS) the composition is skewed to polar residues. Threonine 108, threonine 145, threonine 146, and threonine 147 each carry phosphothreonine. Over residues 129 to 152 (SKLRGLKPKKAPTARKTTTRRPKP) the composition is skewed to basic residues. Residues 161-205 (AGPSSSLGPSGSASAGELSSSEPSTPAQTPLAAPIIPTPALTSPG) are compositionally biased toward low complexity. Serine 179 is modified (phosphoserine; by PLK1). Position 212 is a phosphoserine; by CDK1 (serine 212). The span at 214–223 (SKEEEGLRDQ) shows a compositional bias: basic and acidic residues. Coiled-coil stretches lie at residues 214 to 513 (SKEE…ADYQ) and 942 to 1048 (LKLE…EGLR). The tract at residues 910 to 1280 (EYDAERPPSK…LHQLHGRLIS (371 aa)) is interaction with HPS6. Residues 1064-1089 (GEEQQRGGTPGQAPGALPGPGPVKDS) are disordered. Positions 1184–1213 (SAQLMEQVAQLKSLSDTIEKLKDEVLKETV) form a coiled coil.

It belongs to the dynactin 150 kDa subunit family. As to quaternary structure, monomer and homodimer. Subunit of dynactin, a multiprotein complex part of a tripartite complex with dynein and a adapter, such as BICDL1, BICD2 or HOOK3. The dynactin complex is built around ACTR1A/ACTB filament and consists of an actin-related filament composed of a shoulder domain, a pointed end and a barbed end. Its length is defined by its flexible shoulder domain. The soulder is composed of 2 DCTN1 subunits, 4 DCTN2 and 2 DCTN3. DCTN1/p150(glued) binds directly to microtubules and to cytoplasmic dynein. The 4 DCNT2 (via N-terminus) bind the ACTR1A filament and act as molecular rulers to determine the length. The pointed end is important for binding dynein-dynactin cargo adapters. Consists of 4 subunits: ACTR10, DCNT4, DCTN5 and DCTN6. The barbed end is composed of a CAPZA1:CAPZB heterodimers, which binds ACTR1A/ACTB filament and dynactin and stabilizes dynactin. Interacts with the C-terminus of MAPRE1, MAPRE2 and MAPRE3. Interacts (via C-terminus) with SNX6. Interacts with CLN3, DYNAP, ECPAS and FBXL5. Interacts with MISP; this interaction regulates its distribution at the cell cortex. Interacts with CEP131. Interacts with CEP126. Interacts with CLIP1. Interacts with dynein intermediate chain and dynein heavy chain. Interacts with PLK1 (via POLO-box domain). Interacts with TBCB. Binds preferentially to tyrosinated microtubules than to detyrosinated microtubules. Interacts with PARD6A. Interacts with HPS6. Interacts with KIF3A. Interacts with BICD2. Interacts with DST (isoform 9). Interacts with DST (isoform 1). Identified in a complex with MREG and RILP. Interacts with BCCIP (isoform 2/alpha). Interacts with DCDC1. Interacts with AKNA. Interacts with DYNC1I2. Interacts with RUFY3 and RUFY4. Post-translationally, ubiquitinated by a SCF complex containing FBXL5, leading to its degradation by the proteasome. In terms of processing, phosphorylation by SLK at Thr-145, Thr-146 and Thr-147 targets DCTN1 to the centrosome. It is uncertain if SLK phosphorylates all three threonines or one or two of them. PLK1-mediated phosphorylation at Ser-179 is essential for its localization in the nuclear envelope and promotes its dissociation from microtubules during early mitosis and positively regulates nuclear envelope breakdown during prophase. Ubiquitous with a high level expression observed in the brain (at protein level).

The protein resides in the cytoplasm. Its subcellular location is the cytoskeleton. It localises to the microtubule organizing center. It is found in the centrosome. The protein localises to the centriole. The protein resides in the spindle. Its subcellular location is the nucleus envelope. It localises to the cell cortex. Part of the dynactin complex that activates the molecular motor dynein for ultra-processive transport along microtubules. Plays a key role in dynein-mediated retrograde transport of vesicles and organelles along microtubules by recruiting and tethering dynein to microtubules. Binds to both dynein and microtubules providing a link between specific cargos, microtubules and dynein. Essential for targeting dynein to microtubule plus ends, recruiting dynein to membranous cargos and enhancing dynein processivity (the ability to move along a microtubule for a long distance without falling off the track). Can also act as a brake to slow the dynein motor during motility along the microtubule. Can regulate microtubule stability by promoting microtubule formation, nucleation and polymerization and by inhibiting microtubule catastrophe in neurons. Inhibits microtubule catastrophe by binding both to microtubules and to tubulin, leading to enhanced microtubule stability along the axon. Plays a role in metaphase spindle orientation. Plays a role in centriole cohesion and subdistal appendage organization and function. Its recruitment to the centriole in a KIF3A-dependent manner is essential for the maintenance of centriole cohesion and the formation of subdistal appendage. Also required for microtubule anchoring at the mother centriole. Plays a role in primary cilia formation. This chain is Dynactin subunit 1 (Dctn1), found in Rattus norvegicus (Rat).